The following is a 355-amino-acid chain: Holliday junction branch migration complex subunit RuvB (355 aa).

The tract at residues Thr4–Tyr190 is large ATPase domain (RuvB-L). Residues Leu29, Arg30, Gly71, Lys74, Thr75, Thr76, Glu137–Tyr139, Arg180, Tyr190, and Arg227 contribute to the ATP site. A Mg(2+)-binding site is contributed by Thr75. The interval Asp191 to Asp261 is small ATPAse domain (RuvB-S). A head domain (RuvB-H) region spans residues Pro264–Gln355. Residues Arg300, Arg319, and Arg324 each coordinate DNA.

It belongs to the RuvB family. As to quaternary structure, homohexamer. Forms an RuvA(8)-RuvB(12)-Holliday junction (HJ) complex. HJ DNA is sandwiched between 2 RuvA tetramers; dsDNA enters through RuvA and exits via RuvB. An RuvB hexamer assembles on each DNA strand where it exits the tetramer. Each RuvB hexamer is contacted by two RuvA subunits (via domain III) on 2 adjacent RuvB subunits; this complex drives branch migration. In the full resolvosome a probable DNA-RuvA(4)-RuvB(12)-RuvC(2) complex forms which resolves the HJ.

Its subcellular location is the cytoplasm. It carries out the reaction ATP + H2O = ADP + phosphate + H(+). Functionally, the RuvA-RuvB-RuvC complex processes Holliday junction (HJ) DNA during genetic recombination and DNA repair, while the RuvA-RuvB complex plays an important role in the rescue of blocked DNA replication forks via replication fork reversal (RFR). RuvA specifically binds to HJ cruciform DNA, conferring on it an open structure. The RuvB hexamer acts as an ATP-dependent pump, pulling dsDNA into and through the RuvAB complex. RuvB forms 2 homohexamers on either side of HJ DNA bound by 1 or 2 RuvA tetramers; 4 subunits per hexamer contact DNA at a time. Coordinated motions by a converter formed by DNA-disengaged RuvB subunits stimulates ATP hydrolysis and nucleotide exchange. Immobilization of the converter enables RuvB to convert the ATP-contained energy into a lever motion, pulling 2 nucleotides of DNA out of the RuvA tetramer per ATP hydrolyzed, thus driving DNA branch migration. The RuvB motors rotate together with the DNA substrate, which together with the progressing nucleotide cycle form the mechanistic basis for DNA recombination by continuous HJ branch migration. Branch migration allows RuvC to scan DNA until it finds its consensus sequence, where it cleaves and resolves cruciform DNA. This chain is Holliday junction branch migration complex subunit RuvB, found in Burkholderia multivorans (strain ATCC 17616 / 249).